We begin with the raw amino-acid sequence, 614 residues long: tRNA uridine 5-carboxymethylaminomethyl modification enzyme MnmG (614 aa).

Glycine 10–glycine 15 lines the FAD pocket. Glycine 271 to phenylalanine 285 contacts NAD(+).

The protein belongs to the MnmG family. Homodimer. Heterotetramer of two MnmE and two MnmG subunits. The cofactor is FAD.

The protein localises to the cytoplasm. Its function is as follows. NAD-binding protein involved in the addition of a carboxymethylaminomethyl (cmnm) group at the wobble position (U34) of certain tRNAs, forming tRNA-cmnm(5)s(2)U34. The chain is tRNA uridine 5-carboxymethylaminomethyl modification enzyme MnmG from Ureaplasma urealyticum serovar 10 (strain ATCC 33699 / Western).